The sequence spans 423 residues: 5-hydroxytryptamine receptor 1A (423 aa).

Residues 1 to 38 lie on the Extracellular side of the membrane; the sequence is MEGLSPRQGNNTTSSEGPFGTLGNATGISDVTFSYQVI. N-linked (GlcNAc...) asparagine glycosylation is found at N10, N11, and N24. The chain crosses the membrane as a helical span at residues 39-59; the sequence is TSLLLGTLIFCAVLGNACVVA. The Cytoplasmic segment spans residues 60–73; it reads AIALERSLQNVANY. The chain crosses the membrane as a helical span at residues 74 to 98; it reads LIGSLAVTDLMVSVLVLPMAALYQV. At 99–107 the chain is on the extracellular side; the sequence is LNKWTLGQV. The helical transmembrane segment at 108–132 threads the bilayer; it reads TCDLFIALDVLCCTSSILHLCAIAL. A disulfide bond links C109 and C187. Positions 116 and 120 each coordinate serotonin. A DRY motif; important for ligand-induced conformation changes motif is present at residues 133 to 135; that stretch reads DRY. Topologically, residues 133–152 are cytoplasmic; the sequence is DRYWAITDPIDYVNKRTPRR. Residues 153 to 174 form a helical membrane-spanning segment; the sequence is AAALISLTWLIGFLISIPPMLG. Residues 175–193 are Extracellular-facing; sequence WRTPEDRSDPDACTISKDH. Residues 194–216 form a helical membrane-spanning segment; that stretch reads GYTIYSTFGAFYIPLLLMLVLYG. At 217-346 the chain is on the cytoplasmic side; sequence RIFRAARFRI…LARERKTVKT (130 aa). A disordered region spans residues 235 to 277; sequence RKGADARSGVSPAPQPRKSVNGEPGGREWRQGPGSQAGGPLCT. Residues K345, T346, and G352 each coordinate 1D-myo-inositol 4-phosphate. Residues 347–370 traverse the membrane as a helical segment; the sequence is LGIIMGTFILCWLPFFIVALVLPF. The Extracellular portion of the chain corresponds to 371–378; that stretch reads CESSCHMP. A helical transmembrane segment spans residues 379 to 403; the sequence is TLLGAIINWLGYSNSLLNPVIYAYF. The NPxxY motif; important for ligand-induced conformation changes and signaling signature appears at 396 to 400; it reads NPVIY. Residues F403, N404, and K405 each contribute to the 1D-myo-inositol 4-phosphate site. Residues 404–423 are Cytoplasmic-facing; it reads NKDFQNAFKKIVRCKFCRRR.

The protein belongs to the G-protein coupled receptor 1 family. 5-hydroxytryptamine receptor subfamily. HTR1A sub-subfamily. In terms of assembly, heterodimer; heterodimerizes with GPER1. Interacts with YIF1B. Interacts with GPR39 and GALR1.

The protein localises to the cell membrane. It localises to the cell projection. It is found in the dendrite. G-protein coupled receptor activity is regulated by lipids: phosphatidylinositol 4-phosphate increases HTR1A-mediated activity. Its function is as follows. G-protein coupled receptor for 5-hydroxytryptamine (serotonin). Also functions as a receptor for various drugs and psychoactive substances. Ligand binding causes a conformation change that triggers signaling via guanine nucleotide-binding proteins (G proteins) and modulates the activity of downstream effectors, such as adenylate cyclase. HTR1A is coupled to G(i)/G(o) G alpha proteins and mediates inhibitory neurotransmission: signaling inhibits adenylate cyclase activity and activates a phosphatidylinositol-calcium second messenger system that regulates the release of Ca(2+) ions from intracellular stores. Beta-arrestin family members regulate signaling by mediating both receptor desensitization and resensitization processes. The chain is 5-hydroxytryptamine receptor 1A (HTR1A) from Canis lupus familiaris (Dog).